The following is a 446-amino-acid chain: Sulfoquinovose isomerase (446 aa).

This sequence belongs to the SqvD family.

It carries out the reaction 6-sulfo-beta-D-quinovose = 6-deoxy-6-sulfo-D-fructose. In terms of biological role, part of the sulfo-TAL (or sulfo-SFT) pathway, a D-sulfoquinovose degradation pathway that produces sulfolactate (SL). Catalyzes the isomerization of sulfoquinovose (SQ) to 6-deoxy-6-sulfo-D-fructose (SF). This chain is Sulfoquinovose isomerase, found in Priestia aryabhattai (Bacillus aryabhattai).